The sequence spans 215 residues: uncharacterized protein (215 aa).

This is an uncharacterized protein from Archaeoglobus fulgidus (strain ATCC 49558 / DSM 4304 / JCM 9628 / NBRC 100126 / VC-16).